A 189-amino-acid polypeptide reads, in one-letter code: Cancer/testis antigen family 45 member A1 (189 aa).

Over residues 1–23 the composition is skewed to basic and acidic residues; the sequence is MTDKTEKVAVDPETVFKRPRECD. 2 disordered regions span residues 1-27 and 83-118; these read MTDKTEKVAVDPETVFKRPRECDSPSY and RMMQKPGSNAPVGGNVTSSFSGDDLECRETASSPKS.

The protein belongs to the CT45 family. In terms of tissue distribution, testis specific. Expressed in cancer cell lines.

The protein resides in the nucleus. The polypeptide is Cancer/testis antigen family 45 member A1 (Homo sapiens (Human)).